We begin with the raw amino-acid sequence, 292 residues long: Histamine N-methyltransferase (292 aa).

Glutamate 28 contributes to the substrate binding site. S-adenosyl-L-methionine is bound by residues glycine 60, glutamate 89, glutamine 94, serine 120, and isoleucine 142. Asparagine 283 is a substrate binding site.

The protein belongs to the class I-like SAM-binding methyltransferase superfamily. HNMT family. As to quaternary structure, monomer.

It localises to the cytoplasm. The enzyme catalyses histamine + S-adenosyl-L-methionine = N(tau)-methylhistamine + S-adenosyl-L-homocysteine + H(+). Its function is as follows. Inactivates histamine by N-methylation. Plays an important role in degrading histamine and in regulating the airway response to histamine. The sequence is that of Histamine N-methyltransferase (HNMT) from Bos taurus (Bovine).